The following is a 332-amino-acid chain: Gibberellin 2-beta-dioxygenase (332 aa).

In terms of domain architecture, Fe2OG dioxygenase spans 175 to 280 (KSDSCFRLNH…RLSMIYFGGP (106 aa)). Fe cation-binding residues include H204, D206, and H261. The active site involves R271.

This sequence belongs to the iron/ascorbate-dependent oxidoreductase family. GA2OX subfamily. It depends on Fe cation as a cofactor.

It carries out the reaction gibberellin A1 + 2-oxoglutarate + O2 = gibberellin A8 + succinate + CO2. It functions in the pathway plant hormone biosynthesis; gibberellin biosynthesis. Its function is as follows. Catalyzes the 2-beta-hydroxylation of several biologically active gibberellins, leading to the homeostatic regulation of their endogenous level. Catabolism of gibberellins (GAs) plays a central role in plant development. Converts GA9/GA20 to GA51/GA29 and GA4/GA1 to GA34/GA8. This chain is Gibberellin 2-beta-dioxygenase (GA2OX1), found in Phaseolus coccineus (Scarlet runner bean).